The sequence spans 382 residues: ATP phosphoribosyltransferase regulatory subunit (382 aa).

It belongs to the class-II aminoacyl-tRNA synthetase family. HisZ subfamily. Heteromultimer composed of HisG and HisZ subunits.

The protein localises to the cytoplasm. It participates in amino-acid biosynthesis; L-histidine biosynthesis; L-histidine from 5-phospho-alpha-D-ribose 1-diphosphate: step 1/9. In terms of biological role, required for the first step of histidine biosynthesis. May allow the feedback regulation of ATP phosphoribosyltransferase activity by histidine. The chain is ATP phosphoribosyltransferase regulatory subunit from Burkholderia vietnamiensis (strain G4 / LMG 22486) (Burkholderia cepacia (strain R1808)).